The primary structure comprises 390 residues: Substance-K receptor (390 aa).

The Extracellular portion of the chain corresponds to 1–32 (MGTRAIVSDANILSGLESNATGVTAFSMPGWQ). Asparagine 19 is a glycosylation site (N-linked (GlcNAc...) asparagine). A helical membrane pass occupies residues 33 to 56 (LALWATAYLALVLVAVTGNATVIW). The Cytoplasmic segment spans residues 57-69 (IILAHERMRTVTN). A helical membrane pass occupies residues 70–90 (YFIINLALADLCMAAFNATFN). At 91–107 (FIYASHNIWYFGRAFCY) the chain is on the extracellular side. Residues cysteine 106 and cysteine 181 are joined by a disulfide bond. A helical transmembrane segment spans residues 108–129 (FQNLFPITAMFVSIYSMTAIAA). Residues 130–149 (DRYMAIVHPFQPRLSAPSTK) are Cytoplasmic-facing. Residues 150 to 170 (AIIAGIWLVALALASPQCFYS) form a helical membrane-spanning segment. Residues 171–196 (TITVDEGATKCVVAWPNDNGGKMLLL) are Extracellular-facing. The helical transmembrane segment at 197–218 (YHLVVFVLIYFLPLLVMFGAYS) threads the bilayer. The Cytoplasmic portion of the chain corresponds to 219 to 251 (VIGLTLWKRAVPRHQAHGANLRHLQAKKKFVKA). A helical transmembrane segment spans residues 252-272 (MVLVVLTFAICWLPYHLYFIL). Topologically, residues 273–290 (GTFQEDIYYHKFIQQVYL) are extracellular. Residues 291-310 (ALFWLAMSSTMYNPIIYCCL) form a helical membrane-spanning segment. Residues 311-390 (NHRFRSGFRL…PAGPICKAQA (80 aa)) lie on the Cytoplasmic side of the membrane. Cysteine 324 is lipidated: S-palmitoyl cysteine. The interval 365-390 (HSEATNGQVGSPQDGEPAGPICKAQA) is disordered. Polar residues predominate over residues 366–375 (SEATNGQVGS).

It belongs to the G-protein coupled receptor 1 family.

It is found in the cell membrane. This is a receptor for the tachykinin neuropeptide substance K (neurokinin A). It is associated with G proteins that activate a phosphatidylinositol-calcium second messenger system. The rank order of affinity of this receptor to tachykinins is: substance K &gt; neuromedin-K &gt; substance P. This Rattus norvegicus (Rat) protein is Substance-K receptor (Tacr2).